A 362-amino-acid chain; its full sequence is 3-isopropylmalate dehydrogenase (362 aa).

78–91 (GPKWESLPPDEQPE) lines the NAD(+) pocket. Substrate is bound by residues R99, R109, R138, and D227. Mg(2+)-binding residues include D227, D251, and D255. An NAD(+)-binding site is contributed by 285–297 (GSAPDIAGQGIAN).

It belongs to the isocitrate and isopropylmalate dehydrogenases family. LeuB type 1 subfamily. As to quaternary structure, homodimer. Requires Mg(2+) as cofactor. It depends on Mn(2+) as a cofactor.

The protein localises to the cytoplasm. The enzyme catalyses (2R,3S)-3-isopropylmalate + NAD(+) = 4-methyl-2-oxopentanoate + CO2 + NADH. It functions in the pathway amino-acid biosynthesis; L-leucine biosynthesis; L-leucine from 3-methyl-2-oxobutanoate: step 3/4. Its function is as follows. Catalyzes the oxidation of 3-carboxy-2-hydroxy-4-methylpentanoate (3-isopropylmalate) to 3-carboxy-4-methyl-2-oxopentanoate. The product decarboxylates to 4-methyl-2 oxopentanoate. The protein is 3-isopropylmalate dehydrogenase of Geobacter sulfurreducens (strain ATCC 51573 / DSM 12127 / PCA).